We begin with the raw amino-acid sequence, 321 residues long: ATP-dependent 6-phosphofructokinase (321 aa).

Residue Gly12 participates in ATP binding. ADP contacts are provided by residues 22 to 26 and 55 to 60; these read RGVVR and RYSVSD. ATP contacts are provided by residues 73-74 and 103-106; these read RF and GDGS. Asp104 contributes to the Mg(2+) binding site. 127-129 is a substrate binding site; that stretch reads TID. The active-site Proton acceptor is Asp129. Arg156 contacts ADP. Substrate-binding positions include Arg164 and 171 to 173; that span reads MGR. Residues 187-189, Arg213, and 215-217 each bind ADP; these read GCE and KRH. Residues Glu224, Arg245, and 251–254 contribute to the substrate site; that span reads HIQR.

It belongs to the phosphofructokinase type A (PFKA) family. ATP-dependent PFK group I subfamily. Prokaryotic clade 'B1' sub-subfamily. Homotetramer. Requires Mg(2+) as cofactor.

The protein resides in the cytoplasm. It catalyses the reaction beta-D-fructose 6-phosphate + ATP = beta-D-fructose 1,6-bisphosphate + ADP + H(+). It participates in carbohydrate degradation; glycolysis; D-glyceraldehyde 3-phosphate and glycerone phosphate from D-glucose: step 3/4. Its activity is regulated as follows. Allosterically activated by ADP and other diphosphonucleosides, and allosterically inhibited by phosphoenolpyruvate. In terms of biological role, catalyzes the phosphorylation of D-fructose 6-phosphate to fructose 1,6-bisphosphate by ATP, the first committing step of glycolysis. The polypeptide is ATP-dependent 6-phosphofructokinase (Haemophilus influenzae (strain PittEE)).